A 68-amino-acid chain; its full sequence is DNA-directed RNA polymerase subunit omega (68 aa).

Belongs to the RNA polymerase subunit omega family. The RNAP catalytic core consists of 2 alpha, 1 beta, 1 beta' and 1 omega subunit. When a sigma factor is associated with the core the holoenzyme is formed, which can initiate transcription.

It carries out the reaction RNA(n) + a ribonucleoside 5'-triphosphate = RNA(n+1) + diphosphate. Its function is as follows. Promotes RNA polymerase assembly. Latches the N- and C-terminal regions of the beta' subunit thereby facilitating its interaction with the beta and alpha subunits. This is DNA-directed RNA polymerase subunit omega from Alkaliphilus metalliredigens (strain QYMF).